The chain runs to 901 residues: Protein translocase subunit SecA (901 aa).

ATP is bound by residues Gln87, 105 to 109, and Asp512; that span reads GEGKT. The interval 852-901 is disordered; the sequence is AQMQQLSHQSDDEAAAQDLAAQTGERKVGRNDPCPCGSGKKYKQCHGRLS. Cys885, Cys887, Cys896, and His897 together coordinate Zn(2+). Positions 891–901 are enriched in basic residues; the sequence is KKYKQCHGRLS.

It belongs to the SecA family. As to quaternary structure, monomer and homodimer. Part of the essential Sec protein translocation apparatus which comprises SecA, SecYEG and auxiliary proteins SecDF-YajC and YidC. It depends on Zn(2+) as a cofactor.

It is found in the cell inner membrane. Its subcellular location is the cytoplasm. The catalysed reaction is ATP + H2O + cellular proteinSide 1 = ADP + phosphate + cellular proteinSide 2.. Part of the Sec protein translocase complex. Interacts with the SecYEG preprotein conducting channel. Has a central role in coupling the hydrolysis of ATP to the transfer of proteins into and across the cell membrane, serving both as a receptor for the preprotein-SecB complex and as an ATP-driven molecular motor driving the stepwise translocation of polypeptide chains across the membrane. The protein is Protein translocase subunit SecA of Klebsiella pneumoniae subsp. pneumoniae (strain ATCC 700721 / MGH 78578).